The chain runs to 431 residues: Na(+)-translocating NADH-quinone reductase subunit F (431 aa).

The helical transmembrane segment at 10-30 threads the bilayer; the sequence is ISIASLVFCVIGLILSGVILI. A 2Fe-2S ferredoxin-type domain is found at 41–133; it reads CKLKINNDDS…DMNLEIEERY (93 aa). [2Fe-2S] cluster-binding residues include cysteine 76, cysteine 82, cysteine 85, and cysteine 117. The FAD-binding FR-type domain maps to 136 to 286; that stretch reads ASSWEGTVVS…SGPYGESFMK (151 aa).

The protein belongs to the NqrF family. In terms of assembly, composed of six subunits; NqrA, NqrB, NqrC, NqrD, NqrE and NqrF. [2Fe-2S] cluster is required as a cofactor. The cofactor is FAD.

The protein localises to the cell inner membrane. The enzyme catalyses a ubiquinone + n Na(+)(in) + NADH + H(+) = a ubiquinol + n Na(+)(out) + NAD(+). Functionally, NQR complex catalyzes the reduction of ubiquinone-1 to ubiquinol by two successive reactions, coupled with the transport of Na(+) ions from the cytoplasm to the periplasm. The first step is catalyzed by NqrF, which accepts electrons from NADH and reduces ubiquinone-1 to ubisemiquinone by a one-electron transfer pathway. The chain is Na(+)-translocating NADH-quinone reductase subunit F from Chlamydia felis (strain Fe/C-56) (Chlamydophila felis).